The sequence spans 338 residues: RNA 3'-terminal phosphate cyclase (338 aa).

ATP is bound by residues Gln103 and 283–287 (YLADQ). His308 acts as the Tele-AMP-histidine intermediate in catalysis.

Belongs to the RNA 3'-terminal cyclase family. Type 1 subfamily.

It is found in the cytoplasm. It catalyses the reaction a 3'-end 3'-phospho-ribonucleotide-RNA + ATP = a 3'-end 2',3'-cyclophospho-ribonucleotide-RNA + AMP + diphosphate. Catalyzes the conversion of 3'-phosphate to a 2',3'-cyclic phosphodiester at the end of RNA. The mechanism of action of the enzyme occurs in 3 steps: (A) adenylation of the enzyme by ATP; (B) transfer of adenylate to an RNA-N3'P to produce RNA-N3'PP5'A; (C) and attack of the adjacent 2'-hydroxyl on the 3'-phosphorus in the diester linkage to produce the cyclic end product. The biological role of this enzyme is unknown but it is likely to function in some aspects of cellular RNA processing. This Escherichia coli O127:H6 (strain E2348/69 / EPEC) protein is RNA 3'-terminal phosphate cyclase.